We begin with the raw amino-acid sequence, 610 residues long: MNIAPQFPTPEVTTGTLPASAKVHIAGEIHPQIRVPMRQITLHPTSGEPPVNVYDSSGPYTDPNATIAIDAGLPRIRAEWVVARGDVEPYAGRHVKPEDNGFASGEKLTPEFPVRNAPLRAKPGQAVTQLAYARAGIVTPEMEFIAIRENIGRKAAKDALIRDGESFGASIPDYVTPEFVRQEVAMGRAIIPANINHPEAEPMIIGRNFLVKINANIGNSAVTSSMAEEVEKMVWAIRWGADTVMDLSTGRNIHNIRDWIIRNSPVPIGTVPLYQALEKVHGIAENLTWDVFRDTLIEQAEQGVDYFTIHAGVRLSYIHLTVNRVTGIVSRGGSIMAKWCLHHHKESFLYEHFDEICDICRAYDVSFSLGDGLRPGSIADANDAAQFAELETLGELTKIAWAKDCQVMIEGPGHVPMHKIKENMDKQLKTCGEAPFYTLGPLTTDIAPGYDHITSGIGAAMIGWYGTAMLCYVTPKEHLGLPDRNDVKTGVITYKIAAHAADLAKGHPAAQVRDDALSRARFEFRWEDQFNLSLDPDTARSFHDETLPKEAHKVAHFCSMCGPKFCSMRISHDIRAEAQKEGLEAMAAKYRDGGDLYMPVSDEEKPSVGE.

Residues Asn-216, Met-245, Tyr-274, His-310, 330–332 (SRG), 371–374 (DGLR), and Glu-410 each bind substrate. His-414 is a Zn(2+) binding site. Tyr-437 contributes to the substrate binding site. His-478 provides a ligand contact to Zn(2+). [4Fe-4S] cluster is bound by residues Cys-558, Cys-561, and Cys-566.

This sequence belongs to the ThiC family. As to quaternary structure, homodimer. [4Fe-4S] cluster serves as cofactor.

The enzyme catalyses 5-amino-1-(5-phospho-beta-D-ribosyl)imidazole + S-adenosyl-L-methionine = 4-amino-2-methyl-5-(phosphooxymethyl)pyrimidine + CO + 5'-deoxyadenosine + formate + L-methionine + 3 H(+). The protein operates within cofactor biosynthesis; thiamine diphosphate biosynthesis. Its function is as follows. Catalyzes the synthesis of the hydroxymethylpyrimidine phosphate (HMP-P) moiety of thiamine from aminoimidazole ribotide (AIR) in a radical S-adenosyl-L-methionine (SAM)-dependent reaction. The polypeptide is Phosphomethylpyrimidine synthase (Allorhizobium ampelinum (strain ATCC BAA-846 / DSM 112012 / S4) (Agrobacterium vitis (strain S4))).